The sequence spans 375 residues: Carbamoyl phosphate synthase small chain (375 aa).

Residues 1–186 (MKAILALEDG…IVDGTYAWPG (186 aa)) form a CPSase region. The L-glutamine site is built by S45, G238, and G240. The Glutamine amidotransferase type-1 domain occupies 190 to 375 (RLVVFDMGIK…RNLVRKETGK (186 aa)). Catalysis depends on C265, which acts as the Nucleophile. Positions 266, 269, 307, 309, and 310 each coordinate L-glutamine. Residues H348 and E350 contribute to the active site.

This sequence belongs to the CarA family. In terms of assembly, composed of two chains; the small (or glutamine) chain promotes the hydrolysis of glutamine to ammonia, which is used by the large (or ammonia) chain to synthesize carbamoyl phosphate. Tetramer of heterodimers (alpha,beta)4.

The enzyme catalyses hydrogencarbonate + L-glutamine + 2 ATP + H2O = carbamoyl phosphate + L-glutamate + 2 ADP + phosphate + 2 H(+). The catalysed reaction is L-glutamine + H2O = L-glutamate + NH4(+). Its pathway is amino-acid biosynthesis; L-arginine biosynthesis; carbamoyl phosphate from bicarbonate: step 1/1. It functions in the pathway pyrimidine metabolism; UMP biosynthesis via de novo pathway; (S)-dihydroorotate from bicarbonate: step 1/3. Its function is as follows. Small subunit of the glutamine-dependent carbamoyl phosphate synthetase (CPSase). CPSase catalyzes the formation of carbamoyl phosphate from the ammonia moiety of glutamine, carbonate, and phosphate donated by ATP, constituting the first step of 2 biosynthetic pathways, one leading to arginine and/or urea and the other to pyrimidine nucleotides. The small subunit (glutamine amidotransferase) binds and cleaves glutamine to supply the large subunit with the substrate ammonia. In Solidesulfovibrio magneticus (strain ATCC 700980 / DSM 13731 / RS-1) (Desulfovibrio magneticus), this protein is Carbamoyl phosphate synthase small chain.